The sequence spans 535 residues: Peptide chain release factor 3 (535 aa).

The tr-type G domain occupies 8 to 278 (ARRRTFAIIS…VDQAPAPGPR (271 aa)). GTP is bound by residues 17 to 24 (SHPDAGKT), 85 to 89 (DTPGH), and 139 to 142 (NKLD).

The protein belongs to the TRAFAC class translation factor GTPase superfamily. Classic translation factor GTPase family. PrfC subfamily.

The protein localises to the cytoplasm. Its function is as follows. Increases the formation of ribosomal termination complexes and stimulates activities of RF-1 and RF-2. It binds guanine nucleotides and has strong preference for UGA stop codons. It may interact directly with the ribosome. The stimulation of RF-1 and RF-2 is significantly reduced by GTP and GDP, but not by GMP. This is Peptide chain release factor 3 from Bordetella parapertussis (strain 12822 / ATCC BAA-587 / NCTC 13253).